The following is a 131-amino-acid chain: ATP synthase epsilon chain, chloroplastic (131 aa).

This sequence belongs to the ATPase epsilon chain family. As to quaternary structure, F-type ATPases have 2 components, CF(1) - the catalytic core - and CF(0) - the membrane proton channel. CF(1) has five subunits: alpha(3), beta(3), gamma(1), delta(1), epsilon(1). CF(0) has three main subunits: a, b and c.

The protein localises to the plastid. Its subcellular location is the chloroplast thylakoid membrane. In terms of biological role, produces ATP from ADP in the presence of a proton gradient across the membrane. This chain is ATP synthase epsilon chain, chloroplastic, found in Cyanidioschyzon merolae (strain NIES-3377 / 10D) (Unicellular red alga).